A 487-amino-acid chain; its full sequence is Probable cytochrome P450 516A1 (487 aa).

The chain crosses the membrane as a helical span at residues 1 to 21 (MIILLLSIIIFILYIVKIFKN). Residue Cys-434 participates in heme binding.

Belongs to the cytochrome P450 family. The cofactor is heme.

It is found in the membrane. In Dictyostelium discoideum (Social amoeba), this protein is Probable cytochrome P450 516A1 (cyp516A1).